An 88-amino-acid polypeptide reads, in one-letter code: Beta-insect excitatory toxin 2 (88 aa).

Residues 1-18 (MKFLLLFLVVLPIMGVLG) form the signal peptide. An LCN-type CS-alpha/beta domain is found at 20–83 (KNGYAVDSSG…ISDTRKSYCD (64 aa)). 4 disulfide bridges follow: Cys-34/Cys-55, Cys-40/Cys-60, Cys-44/Cys-62, and Cys-56/Cys-82.

Belongs to the long (4 C-C) scorpion toxin superfamily. Sodium channel inhibitor family. Beta subfamily. In terms of tissue distribution, expressed by the venom gland.

It localises to the secreted. Excitatory insect beta-toxins induce a spastic paralysis. They bind voltage-independently at site-4 of sodium channels (Nav) and shift the voltage of activation toward more negative potentials thereby affecting sodium channel activation and promoting spontaneous and repetitive firing. This toxin is active only on insects. This Androctonus australis (Sahara scorpion) protein is Beta-insect excitatory toxin 2.